The chain runs to 468 residues: Putative ankyrin repeat protein R873 (468 aa).

ANK repeat units lie at residues 38–68 (IKTD…KHNL), 78–107 (SLNE…DIEG), 109–137 (DNCA…NFRA), 138–167 (NNDK…DIRS), 169–197 (NDCS…NIRT), 198–227 (NDDW…DIRS), 229–257 (DDHA…NIIA), 258–287 (EDNY…NITS), 289–316 (YYTI…NIRD), 317–346 (CDSS…DFRE), 348–376 (DDLT…DFRV), 378–406 (DDYP…DVRA), 407–436 (EDDY…NIRA), and 438–466 (NDYA…VLNK).

The polypeptide is Putative ankyrin repeat protein R873 (Acanthamoeba polyphaga mimivirus (APMV)).